A 304-amino-acid chain; its full sequence is MRYLEIRIRCQRAAADAVGNLLLTLTGAGYAVDDPLIVEQNRSRWDMTDLPPGDPEWVTVSGWLPEAGDVEQQRLRLETGLDEIRSLGLGAVDPARFRWVEEEDWAHAWKAYFRPTRVGDRLVVVPAWEEYAPQEGELPIRIDPGMAFGTGTHATTALCMRWLEELVTPGSRVIDVGTGSGILAVAAKHLGAAEVVAIDVDPVAVDAARENAGRNGVEIDVRLATLDQVAEGEADLIVANIIASVIVDILPDVASRLKPGGRFLASGIIAARKEAVTEAMTDAWLLPVGAREQDGWVAILAMKP.

S-adenosyl-L-methionine is bound by residues threonine 156, glycine 177, aspartate 199, and asparagine 240.

Belongs to the methyltransferase superfamily. PrmA family.

It localises to the cytoplasm. It catalyses the reaction L-lysyl-[protein] + 3 S-adenosyl-L-methionine = N(6),N(6),N(6)-trimethyl-L-lysyl-[protein] + 3 S-adenosyl-L-homocysteine + 3 H(+). Functionally, methylates ribosomal protein L11. The sequence is that of Ribosomal protein L11 methyltransferase from Symbiobacterium thermophilum (strain DSM 24528 / JCM 14929 / IAM 14863 / T).